Consider the following 353-residue polypeptide: Protein RecA (353 aa).

Position 68-75 (68-75 (GPESSGKT)) interacts with ATP.

It belongs to the RecA family.

It localises to the cytoplasm. Can catalyze the hydrolysis of ATP in the presence of single-stranded DNA, the ATP-dependent uptake of single-stranded DNA by duplex DNA, and the ATP-dependent hybridization of homologous single-stranded DNAs. It interacts with LexA causing its activation and leading to its autocatalytic cleavage. The polypeptide is Protein RecA (Roseiflexus castenholzii (strain DSM 13941 / HLO8)).